Here is a 109-residue protein sequence, read N- to C-terminus: uncharacterized protein (109 aa).

The signal sequence occupies residues 1 to 23; sequence MKNYNFILISLFIIFFIILNISS. Asn-27 carries an N-linked (GlcNAc...) asparagine glycan. The disordered stretch occupies residues 45 to 109; that stretch reads YQEYMENRTP…KKDQQNQQQN (65 aa). Residues 54 to 72 show a composition bias toward low complexity; sequence PNEQQQQQQQQQNNNNPPQ. Residues 94–103 are compositionally biased toward basic and acidic residues; that stretch reads KLKEKLKKDQ.

Its subcellular location is the secreted. This is an uncharacterized protein from Dictyostelium discoideum (Social amoeba).